We begin with the raw amino-acid sequence, 211 residues long: PDR1 up-regulated protein 1 (211 aa).

The next 2 membrane-spanning stretches (helical) occupy residues 45–67 (ISKASVVGAATGLSAGLGGPYAY) and 82–99 (RTILLGVVSMVIMRNVAA).

This sequence belongs to the PUP1 family.

It localises to the mitochondrion membrane. Mitochondrial protein that contributes to the enhanced virulence of C.glabrata strains that acquired azole resistance. The sequence is that of PDR1 up-regulated protein 1 from Candida glabrata (strain ATCC 2001 / BCRC 20586 / JCM 3761 / NBRC 0622 / NRRL Y-65 / CBS 138) (Yeast).